A 116-amino-acid polypeptide reads, in one-letter code: Putative pterin-4-alpha-carbinolamine dehydratase (116 aa).

This sequence belongs to the pterin-4-alpha-carbinolamine dehydratase family.

The enzyme catalyses (4aS,6R)-4a-hydroxy-L-erythro-5,6,7,8-tetrahydrobiopterin = (6R)-L-erythro-6,7-dihydrobiopterin + H2O. The polypeptide is Putative pterin-4-alpha-carbinolamine dehydratase (Xylella fastidiosa (strain M12)).